The following is a 466-amino-acid chain: 3-isopropylmalate dehydratase large subunit (466 aa).

The [4Fe-4S] cluster site is built by C347, C407, and C410.

This sequence belongs to the aconitase/IPM isomerase family. LeuC type 1 subfamily. Heterodimer of LeuC and LeuD. The cofactor is [4Fe-4S] cluster.

The enzyme catalyses (2R,3S)-3-isopropylmalate = (2S)-2-isopropylmalate. It functions in the pathway amino-acid biosynthesis; L-leucine biosynthesis; L-leucine from 3-methyl-2-oxobutanoate: step 2/4. In terms of biological role, catalyzes the isomerization between 2-isopropylmalate and 3-isopropylmalate, via the formation of 2-isopropylmaleate. In Shigella boydii serotype 4 (strain Sb227), this protein is 3-isopropylmalate dehydratase large subunit.